The following is a 434-amino-acid chain: Enolase (434 aa).

(2R)-2-phosphoglycerate is bound at residue Gln166. Residue Glu208 is the Proton donor of the active site. Mg(2+) contacts are provided by Asp245, Glu290, and Asp317. (2R)-2-phosphoglycerate is bound by residues Lys342, Arg371, Ser372, and Lys393. The active-site Proton acceptor is Lys342.

The protein belongs to the enolase family. Mg(2+) is required as a cofactor.

It localises to the cytoplasm. Its subcellular location is the secreted. It is found in the cell surface. The catalysed reaction is (2R)-2-phosphoglycerate = phosphoenolpyruvate + H2O. It participates in carbohydrate degradation; glycolysis; pyruvate from D-glyceraldehyde 3-phosphate: step 4/5. Functionally, catalyzes the reversible conversion of 2-phosphoglycerate (2-PG) into phosphoenolpyruvate (PEP). It is essential for the degradation of carbohydrates via glycolysis. The protein is Enolase of Caldicellulosiruptor bescii (strain ATCC BAA-1888 / DSM 6725 / KCTC 15123 / Z-1320) (Anaerocellum thermophilum).